Here is a 59-residue protein sequence, read N- to C-terminus: Venom protein 37.1 (59 aa).

Residues 1 to 18 (MVSTLMIASVKLRLYCTA) form the signal peptide.

Belongs to the non-disulfide-bridged peptide (NDBP) superfamily. Long chain multifunctional peptide (group 2) family. As to expression, expressed by the venom gland.

The protein resides in the secreted. The polypeptide is Venom protein 37.1 (Lychas mucronatus (Chinese swimming scorpion)).